Consider the following 1979-residue polypeptide: Myosin-11 (1979 aa).

The residue at position 2 (Ser-2) is a Blocked amino end (Ser). Positions 30–80 (SAKKLVWVPSEKHGFEAASIKEEKGDEVTVELQENGKKVTLSKDDIQKMNP) constitute a Myosin N-terminal SH3-like domain. Residues 84–789 (SKVEDMAELT…VLAHLEEERD (706 aa)) form the Myosin motor domain. Lys-128 is modified (N6,N6,N6-trimethyllysine). 177-184 (GESGAGKT) is a binding site for ATP. Actin-binding stretches follow at residues 667-689 (LTKLMTTLRNTNPNFVRCIIPNH) and 768-782 (RIGQSKIFFRTGVLA). Residues 792 to 821 (ITDVIIAFQAQCRGYLARKAFAKRQQQLTA) enclose the IQ domain. The segment at 850–1979 (LLQVTRQEEE…DGDFNGKASE (1130 aa)) is rodlike tail (S2 and LMM domains). The stretch at 850-1979 (LLQVTRQEEE…DGDFNGKASE (1130 aa)) forms a coiled coil. Disordered stretches follow at residues 1130 to 1150 (QEDLESEKAARNKAEKQKRDL), 1709 to 1736 (RKQADLEKEEMAEELASANSGRTSLQDE), and 1891 to 1979 (QLEE…KASE). Residues 1135–1150 (SEKAARNKAEKQKRDL) are compositionally biased toward basic and acidic residues. Over residues 1968-1979 (GRDGDFNGKASE) the composition is skewed to basic and acidic residues.

Belongs to the TRAFAC class myosin-kinesin ATPase superfamily. Myosin family. As to quaternary structure, muscle myosin is a hexameric protein that consists of 2 heavy chain subunits (MHC), 2 alkali light chain subunits (MLC) and 2 regulatory light chain subunits (MLC-2).

The protein localises to the cytoplasm. It is found in the myofibril. Functionally, muscle contraction. This Gallus gallus (Chicken) protein is Myosin-11 (MYH11).